The sequence spans 344 residues: N-acetyl-gamma-glutamyl-phosphate reductase (344 aa).

Cys-150 is a catalytic residue.

It belongs to the NAGSA dehydrogenase family. Type 1 subfamily.

It is found in the cytoplasm. It catalyses the reaction N-acetyl-L-glutamate 5-semialdehyde + phosphate + NADP(+) = N-acetyl-L-glutamyl 5-phosphate + NADPH + H(+). Its pathway is amino-acid biosynthesis; L-arginine biosynthesis; N(2)-acetyl-L-ornithine from L-glutamate: step 3/4. Its function is as follows. Catalyzes the NADPH-dependent reduction of N-acetyl-5-glutamyl phosphate to yield N-acetyl-L-glutamate 5-semialdehyde. The protein is N-acetyl-gamma-glutamyl-phosphate reductase of Azotobacter vinelandii (strain DJ / ATCC BAA-1303).